The chain runs to 566 residues: Hemocyanin B chain (566 aa).

A disulfide bridge links Cys-82 with Cys-87. Residues His-183, His-187, His-213, His-309, His-313, and His-347 each coordinate Cu cation.

Belongs to the tyrosinase family. Hemocyanin subfamily. Hemolymph.

Its subcellular location is the secreted. The protein localises to the extracellular space. Hemocyanins are copper-containing oxygen carriers occurring freely dissolved in the hemolymph of many mollusks and arthropods. This chain is Hemocyanin B chain, found in Astacus leptodactylus (Turkish narrow-clawed crayfish).